The primary structure comprises 967 residues: RNA polymerase-associated protein RapA (967 aa).

In terms of domain architecture, Helicase ATP-binding spans 163 to 333; it reads EVGQRHAPRV…FARLRLLDPN (171 aa). Position 176–183 (176–183) interacts with ATP; it reads DEVGLGKT. The short motif at 279–282 is the DEAH box element; sequence DEAH. The Helicase C-terminal domain maps to 489–677; sequence RVEWLLNYLT…TCRQQHDSLK (189 aa).

Belongs to the SNF2/RAD54 helicase family. RapA subfamily. As to quaternary structure, interacts with the RNAP. Has a higher affinity for the core RNAP than for the holoenzyme. Its ATPase activity is stimulated by binding to RNAP.

Its function is as follows. Transcription regulator that activates transcription by stimulating RNA polymerase (RNAP) recycling in case of stress conditions such as supercoiled DNA or high salt concentrations. Probably acts by releasing the RNAP, when it is trapped or immobilized on tightly supercoiled DNA. Does not activate transcription on linear DNA. Probably not involved in DNA repair. The sequence is that of RNA polymerase-associated protein RapA from Pectobacterium atrosepticum (strain SCRI 1043 / ATCC BAA-672) (Erwinia carotovora subsp. atroseptica).